A 375-amino-acid chain; its full sequence is Actin-related protein T1 (375 aa).

It belongs to the actin family.

It localises to the cytoplasm. The protein resides in the cytoskeleton. The protein localises to the nucleus. Its subcellular location is the cytoplasmic vesicle. It is found in the secretory vesicle. It localises to the acrosome. In terms of biological role, negatively regulates the Hedgehog (SHH) signaling. Binds to the promoter of the SHH signaling mediator, GLI1, and inhibits its expression. The chain is Actin-related protein T1 (ACTRT1) from Macaca fascicularis (Crab-eating macaque).